The sequence spans 127 residues: Probable glycine cleavage system H protein (127 aa).

The 83-residue stretch at 24–106 (TAEVGITAFA…FGDGWMLTVE (83 aa)) folds into the Lipoyl-binding domain. Lysine 65 carries the post-translational modification N6-lipoyllysine.

Belongs to the GcvH family. As to quaternary structure, the glycine cleavage system is composed of four proteins: P, T, L and H. (R)-lipoate is required as a cofactor.

In terms of biological role, the glycine cleavage system catalyzes the degradation of glycine. The H protein shuttles the methylamine group of glycine from the P protein to the T protein. This is Probable glycine cleavage system H protein from Haloarcula marismortui (strain ATCC 43049 / DSM 3752 / JCM 8966 / VKM B-1809) (Halobacterium marismortui).